Consider the following 60-residue polypeptide: Large ribosomal subunit protein bL32 (60 aa).

Disordered stretches follow at residues 1–22 (MAVQ…HNAL) and 34–60 (GETH…KSEA). Basic residues predominate over residues 9–19 (SPSKRGMHRSH).

This sequence belongs to the bacterial ribosomal protein bL32 family.

This Variovorax paradoxus (strain S110) protein is Large ribosomal subunit protein bL32.